We begin with the raw amino-acid sequence, 697 residues long: Sialidase B (697 aa).

The N-terminal stretch at 1 to 29 (MNKRGLYSKLGISVVGISLLMGVPTLIHA) is a signal peptide. R245 contributes to the substrate binding site. Catalysis depends on D270, which acts as the Proton acceptor. 3 BNR repeats span residues 280 to 291 (SYSDDNGKTWSE), 462 to 473 (TTSQNRGESWEQ), and 517 to 528 (LISDDSGQTWKK). Residue E541 is part of the active site. R557 contributes to the substrate binding site. A BNR 4 repeat occupies 566–577 (MTSRDSGETWSK). Substrate is bound at residue R619. Y653 functions as the Nucleophile in the catalytic mechanism.

The protein belongs to the glycosyl hydrolase 33 family.

The catalysed reaction is Hydrolysis of alpha-(2-&gt;3)-, alpha-(2-&gt;6)-, alpha-(2-&gt;8)- glycosidic linkages of terminal sialic acid residues in oligosaccharides, glycoproteins, glycolipids, colominic acid and synthetic substrates.. This chain is Sialidase B (nanB), found in Streptococcus pneumoniae serotype 4 (strain ATCC BAA-334 / TIGR4).